A 120-amino-acid chain; its full sequence is Ribosome-binding factor A (120 aa).

This sequence belongs to the RbfA family. In terms of assembly, monomer. Binds 30S ribosomal subunits, but not 50S ribosomal subunits or 70S ribosomes.

The protein resides in the cytoplasm. Functionally, one of several proteins that assist in the late maturation steps of the functional core of the 30S ribosomal subunit. Associates with free 30S ribosomal subunits (but not with 30S subunits that are part of 70S ribosomes or polysomes). Required for efficient processing of 16S rRNA. May interact with the 5'-terminal helix region of 16S rRNA. This chain is Ribosome-binding factor A, found in Buchnera aphidicola subsp. Acyrthosiphon pisum (strain 5A).